Consider the following 91-residue polypeptide: Acylphosphatase (91 aa).

The 87-residue stretch at Arg-5 to Arg-91 folds into the Acylphosphatase-like domain. Active-site residues include Arg-20 and Asn-38.

This sequence belongs to the acylphosphatase family.

It carries out the reaction an acyl phosphate + H2O = a carboxylate + phosphate + H(+). This Thermobifida fusca (strain YX) protein is Acylphosphatase (acyP).